Here is a 366-residue protein sequence, read N- to C-terminus: RISC-loading complex subunit TARBP2 (366 aa).

3 sufficient for interaction with PRKRA regions span residues Met-22–Leu-105, Ser-152–Asp-234, and Leu-287–Lys-366. A DRBM 1 domain is found at Thr-30–Gly-97. At Ser-152 the chain carries Phosphoserine. DRBM domains follow at residues Asn-159–Thr-227 and Ala-293–Ile-361. The interval Val-228–Lys-366 is sufficient for interaction with DICER1.

Belongs to the TARBP2 family. In terms of assembly, self-associates. Component of the RISC loading complex (RLC), or micro-RNA (miRNA) loading complex (miRLC), which is composed of DICER1, AGO2 and TARBP2. Note that the trimeric RLC/miRLC is also referred to as RISC. Interacts with EIF2AK2/PKR and inhibits its protein kinase activity. Interacts with DHX9 and PRKRA. Interacts with DICER1, AGO2, MOV10, EIF6 and RPL7A (60S ribosome subunit); they form a large RNA-induced silencing complex (RISC). Interacts with IRF7; this interaction prevents IRF7 phosphorylation and activation. (Microbial infection) Interacts with FTSJ3; forms a complex with FTSJ3 and HIV-1 TAR RNA. As to quaternary structure, (Microbial infection) Interacts with ebolavirus VP30; this interaction, which occurs only in the presence of siRNA, prevents TARBP2 binding to DICER1 and thus allows the virus to counteract host RNA silencing. In terms of assembly, (Microbial infection) Interacts with ebolavirus VP35; this interaction prevents TARBP2 binding to DICER1 and thus allows the virus to counteract host RNA silencing.

It localises to the cytoplasm. It is found in the perinuclear region. The protein resides in the nucleus. In terms of biological role, required for formation of the RNA induced silencing complex (RISC). Component of the RISC loading complex (RLC), also known as the micro-RNA (miRNA) loading complex (miRLC), which is composed of DICER1, AGO2 and TARBP2. Within the RLC/miRLC, DICER1 and TARBP2 are required to process precursor miRNAs (pre-miRNAs) to mature miRNAs and then load them onto AGO2. AGO2 bound to the mature miRNA constitutes the minimal RISC and may subsequently dissociate from DICER1 and TARBP2. May also play a role in the production of short interfering RNAs (siRNAs) from double-stranded RNA (dsRNA) by DICER1. Binds in vitro to the PRM1 3'-UTR. Seems to act as a repressor of translation. For some pre-miRNA substrates, may also alter the choice of cleavage site by DICER1. Negatively regulates IRF7-mediated IFN-beta signaling triggered by viral infection by inhibiting the phosphorylation of IRF7 and promoting its 'Lys'-48-linked ubiquitination and degradation. Functionally, (Microbial infection) Binds to the HIV-1 TAR RNA which is located in the long terminal repeat (LTR) of HIV-1, and stimulates translation of TAR-containing RNAs. This is achieved in part at least by binding to and inhibiting EIF2AK2/PKR, thereby reducing phosphorylation and inhibition of EIF2S1/eIF-2-alpha. May also promote translation of TAR-containing RNAs independently of EIF2AK2/PKR. Mediates recruitment of FTSJ3 methyltransferase to HIV-1 RNA, leading to 2'-O-methylation of the viral genome, allowing HIV-1 to escape the innate immune system. The chain is RISC-loading complex subunit TARBP2 from Homo sapiens (Human).